Consider the following 233-residue polypeptide: 7-cyano-7-deazaguanine synthase (233 aa).

Residue 7–17 (LSGGLDSLVTS) participates in ATP binding. Residues C195, C206, C209, and C212 each contribute to the Zn(2+) site.

This sequence belongs to the QueC family. Zn(2+) serves as cofactor.

It catalyses the reaction 7-carboxy-7-deazaguanine + NH4(+) + ATP = 7-cyano-7-deazaguanine + ADP + phosphate + H2O + H(+). The protein operates within purine metabolism; 7-cyano-7-deazaguanine biosynthesis. In terms of biological role, catalyzes the ATP-dependent conversion of 7-carboxy-7-deazaguanine (CDG) to 7-cyano-7-deazaguanine (preQ(0)). This Methanococcus vannielii (strain ATCC 35089 / DSM 1224 / JCM 13029 / OCM 148 / SB) protein is 7-cyano-7-deazaguanine synthase.